The primary structure comprises 361 residues: Chorismate synthase (361 aa).

NADP(+)-binding residues include Arg-48 and Arg-54. Residues 125 to 127, 238 to 239, Gly-278, 293 to 297, and Arg-319 contribute to the FMN site; these read RSS, NA, and KPTSS.

The protein belongs to the chorismate synthase family. Homotetramer. The cofactor is FMNH2.

It catalyses the reaction 5-O-(1-carboxyvinyl)-3-phosphoshikimate = chorismate + phosphate. Its pathway is metabolic intermediate biosynthesis; chorismate biosynthesis; chorismate from D-erythrose 4-phosphate and phosphoenolpyruvate: step 7/7. Functionally, catalyzes the anti-1,4-elimination of the C-3 phosphate and the C-6 proR hydrogen from 5-enolpyruvylshikimate-3-phosphate (EPSP) to yield chorismate, which is the branch point compound that serves as the starting substrate for the three terminal pathways of aromatic amino acid biosynthesis. This reaction introduces a second double bond into the aromatic ring system. The protein is Chorismate synthase of Vibrio parahaemolyticus serotype O3:K6 (strain RIMD 2210633).